A 512-amino-acid polypeptide reads, in one-letter code: Sodium/proline symporter (512 aa).

A run of 13 helical transmembrane segments spans residues 16-36, 54-74, 85-105, 139-159, 174-194, 200-220, 240-260, 286-306, 327-347, 381-401, 410-430, 438-458, and 467-487; these read WQTY…GFYG, IGPY…WMIM, LSAM…YFVV, IISG…GFVS, FGLI…GYLA, FFQG…AMMN, LFKG…LGYF, ISWM…GIAF, VLFH…AIMS, FVMI…AIAW, LVGN…LFAL, AGAV…IAWI, and IFGL…TYVV.

The protein belongs to the sodium:solute symporter (SSF) (TC 2.A.21) family.

The protein localises to the cell membrane. It carries out the reaction L-proline(in) + Na(+)(in) = L-proline(out) + Na(+)(out). Functionally, catalyzes the sodium-dependent uptake of extracellular L-proline. Since most S.aureus strains are L-proline auxotrophs, this transporter may aid the bacterial persistence during an infection of tissues with low proline concentrations. The polypeptide is Sodium/proline symporter (putP) (Staphylococcus aureus (strain bovine RF122 / ET3-1)).